The chain runs to 153 residues: MTRVVAQGTFDLLHPGHVHYLEDAATYGDELHAIVARRTNVTHKPAPILCAEQRRDMVAALTAVDEAHLGHPEDVFVPIQRLDPDVIVLGFDQHHDEADIAAALAERGIDCRVERASGRDPRYEDELLSSGDIVDRILKQRGSDCDGAREGQR.

Residues Thr9–Phe10, His14–His17, and Asp92 contribute to the ATP site.

Belongs to the archaeal FAD synthase family. In terms of assembly, homodimer. Requires a divalent metal cation as cofactor.

The enzyme catalyses FMN + ATP + H(+) = FAD + diphosphate. The protein operates within cofactor biosynthesis; FAD biosynthesis; FAD from FMN: step 1/1. Functionally, catalyzes the transfer of the AMP portion of ATP to flavin mononucleotide (FMN) to produce flavin adenine dinucleotide (FAD) coenzyme. In Halorubrum lacusprofundi (strain ATCC 49239 / DSM 5036 / JCM 8891 / ACAM 34), this protein is FAD synthase.